A 267-amino-acid polypeptide reads, in one-letter code: 2-keto-3-deoxy-L-rhamnonate aldolase (267 aa).

H49 serves as the catalytic Proton acceptor. Residue Q151 participates in substrate binding. E153 is a Mg(2+) binding site. Substrate contacts are provided by A178 and D179. Position 179 (D179) interacts with Mg(2+).

It belongs to the HpcH/HpaI aldolase family. KDR aldolase subfamily. In terms of assembly, homohexamer. Requires Mg(2+) as cofactor.

It carries out the reaction 2-dehydro-3-deoxy-L-rhamnonate = (S)-lactaldehyde + pyruvate. Catalyzes the reversible retro-aldol cleavage of 2-keto-3-deoxy-L-rhamnonate (KDR) to pyruvate and lactaldehyde. This Escherichia coli O6:K15:H31 (strain 536 / UPEC) protein is 2-keto-3-deoxy-L-rhamnonate aldolase.